A 21-amino-acid chain; its full sequence is Ocellatin-2 (21 aa).

I21 is subject to Isoleucine amide.

In terms of tissue distribution, expressed by the skin dorsal glands.

The protein localises to the secreted. Functionally, has hemolytic activity against human erythrocytes and antibacterial activity against the Gram-negative bacterium E.coli. In Leptodactylus ocellatus (Argus frog), this protein is Ocellatin-2.